The sequence spans 546 residues: NAD(P)H-quinone oxidoreductase chain 4 (546 aa).

The next 14 membrane-spanning stretches (helical) occupy residues 17-37, 48-68, 103-123, 127-147, 149-169, 181-201, 222-242, 256-276, 290-310, 327-347, 348-368, 389-409, 430-450, and 477-497; these read VPWL…VPFI, WYAL…YLNG, LILL…PVSF, LFYF…AVQD, LLFF…LAIW, FILY…AMGF, GFQL…LPIV, TAPV…YALL, FAPL…LTSF, MGFV…GAML, QMIS…ATYD, FALW…SGFV, VVIC…LLSM, and VYII…PRLM.

This sequence belongs to the complex I subunit 4 family.

The protein resides in the cellular thylakoid membrane. The catalysed reaction is a plastoquinone + NADH + (n+1) H(+)(in) = a plastoquinol + NAD(+) + n H(+)(out). It catalyses the reaction a plastoquinone + NADPH + (n+1) H(+)(in) = a plastoquinol + NADP(+) + n H(+)(out). Functionally, NDH-1 shuttles electrons from NAD(P)H, via FMN and iron-sulfur (Fe-S) centers, to quinones in the respiratory chain. The immediate electron acceptor for the enzyme in this species is believed to be plastoquinone. Couples the redox reaction to proton translocation (for every two electrons transferred, four hydrogen ions are translocated across the cytoplasmic membrane), and thus conserves the redox energy in a proton gradient. This Parasynechococcus marenigrum (strain WH8102) protein is NAD(P)H-quinone oxidoreductase chain 4.